The sequence spans 504 residues: Glucose-6-phosphate isomerase (504 aa).

The active-site Proton donor is Glu333. Residues His364 and Lys473 contribute to the active site.

The protein belongs to the GPI family.

The protein resides in the cytoplasm. The enzyme catalyses alpha-D-glucose 6-phosphate = beta-D-fructose 6-phosphate. Its pathway is carbohydrate biosynthesis; gluconeogenesis. It functions in the pathway carbohydrate degradation; glycolysis; D-glyceraldehyde 3-phosphate and glycerone phosphate from D-glucose: step 2/4. Catalyzes the reversible isomerization of glucose-6-phosphate to fructose-6-phosphate. The polypeptide is Glucose-6-phosphate isomerase (Xanthomonas oryzae pv. oryzae (strain PXO99A)).